We begin with the raw amino-acid sequence, 561 residues long: 2-succinyl-5-enolpyruvyl-6-hydroxy-3-cyclohexene-1-carboxylate synthase (561 aa).

The protein belongs to the TPP enzyme family. MenD subfamily. Homodimer. Requires Mg(2+) as cofactor. It depends on Mn(2+) as a cofactor. Thiamine diphosphate is required as a cofactor.

It catalyses the reaction isochorismate + 2-oxoglutarate + H(+) = 5-enolpyruvoyl-6-hydroxy-2-succinyl-cyclohex-3-ene-1-carboxylate + CO2. It functions in the pathway quinol/quinone metabolism; 1,4-dihydroxy-2-naphthoate biosynthesis; 1,4-dihydroxy-2-naphthoate from chorismate: step 2/7. It participates in quinol/quinone metabolism; menaquinone biosynthesis. In terms of biological role, catalyzes the thiamine diphosphate-dependent decarboxylation of 2-oxoglutarate and the subsequent addition of the resulting succinic semialdehyde-thiamine pyrophosphate anion to isochorismate to yield 2-succinyl-5-enolpyruvyl-6-hydroxy-3-cyclohexene-1-carboxylate (SEPHCHC). In Proteus mirabilis (strain HI4320), this protein is 2-succinyl-5-enolpyruvyl-6-hydroxy-3-cyclohexene-1-carboxylate synthase.